Reading from the N-terminus, the 180-residue chain is NADH-quinone oxidoreductase subunit I (180 aa).

2 consecutive 4Fe-4S ferredoxin-type domains span residues 48–80 (IVLT…LQKA) and 90–119 (EFFR…LTPD). C60, C63, C66, C70, C99, C102, C105, and C109 together coordinate [4Fe-4S] cluster. Basic and acidic residues predominate over residues 161-174 (KPKGDAEHEAKPID). The disordered stretch occupies residues 161-180 (KPKGDAEHEAKPIDVKSLLP).

The protein belongs to the complex I 23 kDa subunit family. NDH-1 is composed of 14 different subunits. Subunits NuoA, H, J, K, L, M, N constitute the membrane sector of the complex. Requires [4Fe-4S] cluster as cofactor.

The protein resides in the cell inner membrane. It catalyses the reaction a quinone + NADH + 5 H(+)(in) = a quinol + NAD(+) + 4 H(+)(out). In terms of biological role, NDH-1 shuttles electrons from NADH, via FMN and iron-sulfur (Fe-S) centers, to quinones in the respiratory chain. The immediate electron acceptor for the enzyme in this species is believed to be ubiquinone. Couples the redox reaction to proton translocation (for every two electrons transferred, four hydrogen ions are translocated across the cytoplasmic membrane), and thus conserves the redox energy in a proton gradient. This Aeromonas salmonicida (strain A449) protein is NADH-quinone oxidoreductase subunit I.